Reading from the N-terminus, the 72-residue chain is Heat shock factor-binding protein 1-like protein 1 (72 aa).

Residues 12–66 adopt a coiled-coil conformation; it reads DLLQNAAENLLQEVEEHFQALTATLNLRMEEMGNRIEDLQRNVDDLMAQAGIENS.

It belongs to the HSBP1 family.

This is Heat shock factor-binding protein 1-like protein 1 (Hsbp1l1) from Rattus norvegicus (Rat).